We begin with the raw amino-acid sequence, 69 residues long: Cytochrome c oxidase subunit 8A, mitochondrial (69 aa).

A mitochondrion-targeting transit peptide spans 1–25; that stretch reads MSVLTPLLLRGLTGSARRLPVLRAQ. The short motif at 2 to 19 is the SIFI-degron element; the sequence is SVLTPLLLRGLTGSARRL. Topologically, residues 26 to 36 are mitochondrial matrix; it reads VHSKPPREKLG. Residues 37 to 60 traverse the membrane as a helical segment; sequence TMDVAIGLTSCFVCFLLPSGWVLS. Over 61–69 the chain is Mitochondrial intermembrane; sequence HLETYKKRE.

Belongs to the cytochrome c oxidase VIII family. Component of the cytochrome c oxidase (complex IV, CIV), a multisubunit enzyme composed of 14 subunits. The complex is composed of a catalytic core of 3 subunits MT-CO1, MT-CO2 and MT-CO3, encoded in the mitochondrial DNA, and 11 supernumerary subunits COX4I, COX5A, COX5B, COX6A, COX6B, COX6C, COX7A, COX7B, COX7C, COX8 and NDUFA4, which are encoded in the nuclear genome. The complex exists as a monomer or a dimer and forms supercomplexes (SCs) in the inner mitochondrial membrane with NADH-ubiquinone oxidoreductase (complex I, CI) and ubiquinol-cytochrome c oxidoreductase (cytochrome b-c1 complex, complex III, CIII), resulting in different assemblies (supercomplex SCI(1)III(2)IV(1) and megacomplex MCI(2)III(2)IV(2)). Post-translationally, in response to mitochondrial stress, the precursor protein is ubiquitinated by the SIFI complex in the cytoplasm before mitochondrial import, leading to its degradation. Within the SIFI complex, UBR4 initiates ubiquitin chain that are further elongated or branched by KCMF1.

It is found in the mitochondrion inner membrane. Its pathway is energy metabolism; oxidative phosphorylation. In terms of biological role, component of the cytochrome c oxidase, the last enzyme in the mitochondrial electron transport chain which drives oxidative phosphorylation. The respiratory chain contains 3 multisubunit complexes succinate dehydrogenase (complex II, CII), ubiquinol-cytochrome c oxidoreductase (cytochrome b-c1 complex, complex III, CIII) and cytochrome c oxidase (complex IV, CIV), that cooperate to transfer electrons derived from NADH and succinate to molecular oxygen, creating an electrochemical gradient over the inner membrane that drives transmembrane transport and the ATP synthase. Cytochrome c oxidase is the component of the respiratory chain that catalyzes the reduction of oxygen to water. Electrons originating from reduced cytochrome c in the intermembrane space (IMS) are transferred via the dinuclear copper A center (CU(A)) of subunit 2 and heme A of subunit 1 to the active site in subunit 1, a binuclear center (BNC) formed by heme A3 and copper B (CU(B)). The BNC reduces molecular oxygen to 2 water molecules using 4 electrons from cytochrome c in the IMS and 4 protons from the mitochondrial matrix. The chain is Cytochrome c oxidase subunit 8A, mitochondrial (COX8A) from Eulemur fulvus fulvus (Brown lemur).